We begin with the raw amino-acid sequence, 281 residues long: Small ribosomal subunit protein uS2 (281 aa).

The protein belongs to the universal ribosomal protein uS2 family.

The sequence is that of Small ribosomal subunit protein uS2 (rpsB) from Chlamydia muridarum (strain MoPn / Nigg).